Reading from the N-terminus, the 139-residue chain is Large ribosomal subunit protein uL16 (139 aa).

The span at 1-20 (MLIPRRVKHRKQHHPKRRGM) shows a compositional bias: basic residues. A disordered region spans residues 1–22 (MLIPRRVKHRKQHHPKRRGMAK).

It belongs to the universal ribosomal protein uL16 family. In terms of assembly, part of the 50S ribosomal subunit.

In terms of biological role, binds 23S rRNA and is also seen to make contacts with the A and possibly P site tRNAs. This is Large ribosomal subunit protein uL16 from Streptomyces coelicolor (strain ATCC BAA-471 / A3(2) / M145).